Here is an 88-residue protein sequence, read N- to C-terminus: MANHKSALKRAKQNTIKQMRNRSYKTRLRNMVKKVNQAVEAQSVDEAKTILVETQSIIDKCASKGVIHKNTASRKISRLAKKVEALAG.

The span at 1 to 12 (MANHKSALKRAK) shows a compositional bias: basic residues. The tract at residues 1 to 23 (MANHKSALKRAKQNTIKQMRNRS) is disordered.

This sequence belongs to the bacterial ribosomal protein bS20 family.

Its function is as follows. Binds directly to 16S ribosomal RNA. The sequence is that of Small ribosomal subunit protein bS20 from Desulfatibacillum aliphaticivorans.